A 336-amino-acid chain; its full sequence is Porphobilinogen deaminase (336 aa).

S-(dipyrrolylmethanemethyl)cysteine is present on cysteine 251. Phosphoserine occurs at positions 327 and 329.

This sequence belongs to the HMBS family. Requires dipyrromethane as cofactor.

The enzyme catalyses 4 porphobilinogen + H2O = hydroxymethylbilane + 4 NH4(+). It participates in porphyrin-containing compound metabolism; protoporphyrin-IX biosynthesis; coproporphyrinogen-III from 5-aminolevulinate: step 2/4. In terms of biological role, tetrapolymerization of the monopyrrole PBG into the hydroxymethylbilane pre-uroporphyrinogen in several discrete steps. This chain is Porphobilinogen deaminase (hem3), found in Schizosaccharomyces pombe (strain 972 / ATCC 24843) (Fission yeast).